The chain runs to 801 residues: H(+)/Cl(-) exchange transporter 3 (801 aa).

The Cytoplasmic segment spans residues 1-125 (MESEQLFHRG…WEMTKSLYDA (125 aa)). 3 consecutive short sequence motifs (di-leucine internalization motif; mediates targeting to late endosome and lysosome membranes) follow at residues 28–29 (LL), 46–47 (LL), and 71–75 (LLDLL). The helical transmembrane segment at 126 to 163 (WSGWLVVTLTGLASGALAGLIDIAADWMTDLKEGICLS) threads the bilayer. N-linked (GlcNAc...) asparagine glycosylation occurs at Asn177. Residues 209–232 (MNYIMYIFWALSFAFLAVSLVKVF) form a helical membrane-spanning segment. The Selectivity filter part_1 signature appears at 238–242 (GSGIP). Chloride is bound at residue Ser239. Residues 241–248 (IPEIKTIL) constitute an intramembrane region (helical). 2 helical membrane-spanning segments follow: residues 258–276 (GKWTLMIKTVTLVLAVASG) and 282–301 (EGPLVHVACCCGNIFSYLFP). The short motif at 280 to 284 (GKEGP) is the Selectivity filter part_2 element. 2 consecutive intramembrane regions (helical) follow at residues 313-325 (VLSAASAAGVSVA) and 329-337 (PIGGVLFSL). The next 3 helical transmembrane spans lie at 349–367 (LWRSFFAALVAAFVLRSIN), 391–416 (FPFILLGVFGGLWGAFFIRANIAWCR), and 423–443 (FGKYPVLEVIIVAAITAVIAF). 2 N-linked (GlcNAc...) asparagine glycosylation sites follow: Asn451 and Asn479. A helical transmembrane segment spans residues 500 to 520 (IWQLCLALIFKIIMTVFTFGI). The Selectivity filter part_3 motif lies at 525 to 529 (GLFIP). Phe527 lines the chloride pocket. 2 intramembrane regions (helical) span residues 555-569 (GLYAMVGAAACLGGV) and 573-584 (TVSLVVIVFELT). The note=Loop between two helices intramembrane region spans 585–588 (GGLE). Residues 589 to 607 (YIVPLMAAVMTSKWVGDAF) traverse the membrane as a helical segment. Topologically, residues 608–801 (GREGIYEAHI…NQDPASIMFN (194 aa)) are cytoplasmic. Tyr613 provides a ligand contact to chloride. CBS domains lie at 641-705 (MRPR…ARKK) and 738-795 (LDMS…NQDP). ATP-binding positions include 672–674 (YNG) and 779–782 (TKKD).

This sequence belongs to the chloride channel (TC 2.A.49) family. ClC-3/CLCN3 subfamily. In terms of assembly, monomer and homodimer. Forms heterodimers with CLCN4. In terms of processing, N-glycosylated.

Its subcellular location is the early endosome membrane. It is found in the late endosome membrane. The protein localises to the lysosome membrane. It localises to the cell membrane. Functionally, strongly outwardly rectifying, electrogenic H(+)/Cl(-)exchanger which mediates the exchange of chloride ions against protons. The CLC channel family contains both chloride channels and proton-coupled anion transporters that exchange chloride or another anion for protons. The presence of conserved gating glutamate residues is typical for family members that function as antiporters. In Pongo abelii (Sumatran orangutan), this protein is H(+)/Cl(-) exchange transporter 3 (CLCN3).